Reading from the N-terminus, the 118-residue chain is Aspartate 1-decarboxylase (118 aa).

Ser25 acts as the Schiff-base intermediate with substrate; via pyruvic acid in catalysis. Pyruvic acid (Ser) is present on Ser25. Thr57 contacts substrate. Tyr58 functions as the Proton donor in the catalytic mechanism. 73–75 is a substrate binding site; the sequence is GAA.

Belongs to the PanD family. In terms of assembly, heterooctamer of four alpha and four beta subunits. It depends on pyruvate as a cofactor. Is synthesized initially as an inactive proenzyme, which is activated by self-cleavage at a specific serine bond to produce a beta-subunit with a hydroxyl group at its C-terminus and an alpha-subunit with a pyruvoyl group at its N-terminus.

It localises to the cytoplasm. It catalyses the reaction L-aspartate + H(+) = beta-alanine + CO2. The protein operates within cofactor biosynthesis; (R)-pantothenate biosynthesis; beta-alanine from L-aspartate: step 1/1. Catalyzes the pyruvoyl-dependent decarboxylation of aspartate to produce beta-alanine. The chain is Aspartate 1-decarboxylase from Phenylobacterium zucineum (strain HLK1).